A 329-amino-acid chain; its full sequence is Putative ubiquitin thioesterase otu1 (329 aa).

The interval 7–89 is UBX-like; sequence RLKYENQSAV…ATSFSTNEPA (83 aa). Residues 85–127 form a disordered region; it reads TNEPAKPPIPNAATKPTFPPQTEISNPPAVSHQSKNTSQDPPY. Residues 115 to 124 show a composition bias toward polar residues; the sequence is SHQSKNTSQD. The OTU domain maps to 135–254; the sequence is IALRVMPDDN…GIHYDLAALA (120 aa). Residues 140–146 form a cys-loop region; that stretch reads MPDDNSC. Residue aspartate 143 is part of the active site. Cysteine 146 acts as the Nucleophile in catalysis. Residues 193 to 203 are variable-loop; that stretch reads IRKETSWGGYI. A his-loop region spans residues 243 to 247; the sequence is YSGIH. Position 246 (isoleucine 246) interacts with substrate. The active site involves histidine 247. Positions 272 to 277 are S2 site; that stretch reads VTITPY. The segment at 299–323 adopts a C2H2-type zinc-finger fold; it reads IRCTICGTGLVGEKDATAHALATGH. Histidine 323 is a catalytic residue.

The protein localises to the cytoplasm. The protein resides in the nucleus. It carries out the reaction Thiol-dependent hydrolysis of ester, thioester, amide, peptide and isopeptide bonds formed by the C-terminal Gly of ubiquitin (a 76-residue protein attached to proteins as an intracellular targeting signal).. Hydrolase that can remove conjugated ubiquitin from proteins and may therefore play an important regulatory role at the level of protein turnover by preventing degradation. Has a role in meiosis. In Schizosaccharomyces pombe (strain 972 / ATCC 24843) (Fission yeast), this protein is Putative ubiquitin thioesterase otu1 (otu1).